The sequence spans 351 residues: Porphobilinogen deaminase (351 aa).

At C242 the chain carries S-(dipyrrolylmethanemethyl)cysteine. In terms of domain architecture, RPE1 insert spans 257-306; that stretch reads PRHLSKLAYREVLEGNTEALATAAYKSNRTDASTGLTYKLPLEVEFGKVS.

The protein belongs to the HMBS family. In terms of assembly, monomer. Requires dipyrromethane as cofactor.

The enzyme catalyses 4 porphobilinogen + H2O = hydroxymethylbilane + 4 NH4(+). It participates in porphyrin-containing compound metabolism; protoporphyrin-IX biosynthesis; coproporphyrinogen-III from 5-aminolevulinate: step 2/4. Its function is as follows. Tetrapolymerization of the monopyrrole PBG into the hydroxymethylbilane pre-uroporphyrinogen in several discrete steps. This chain is Porphobilinogen deaminase, found in Rickettsia conorii (strain ATCC VR-613 / Malish 7).